The sequence spans 623 residues: Leucine aminopeptidase 2 (623 aa).

A peptide-binding positions include 136 to 138 (QCQ) and 273 to 278 (PYGGME). Residue His302 coordinates Zn(2+). Glu303 functions as the Proton acceptor in the catalytic mechanism. The Zn(2+) site is built by His306 and Glu325. The active-site Proton donor is Tyr390.

The protein belongs to the peptidase M1 family. Zn(2+) serves as cofactor.

It localises to the cytoplasm. The protein resides in the nucleus. It carries out the reaction an epoxide + H2O = an ethanediol. Its function is as follows. Aminopeptidase that preferentially cleaves di- and tripeptides. Also has low epoxide hydrolase activity (in vitro). Can hydrolyze the epoxide leukotriene LTA(4) but it forms preferentially 5,6-dihydroxy-7,9,11,14-eicosatetraenoic acid rather than the cytokine leukotriene B(4) as the product compared to the homologous mammalian enzyme (in vitro). This is Leucine aminopeptidase 2 from Phaeosphaeria nodorum (strain SN15 / ATCC MYA-4574 / FGSC 10173) (Glume blotch fungus).